Here is a 133-residue protein sequence, read N- to C-terminus: Small ribosomal subunit protein eS8 (133 aa).

The disordered stretch occupies residues methionine 1–aspartate 22.

It belongs to the eukaryotic ribosomal protein eS8 family. Part of the 30S ribosomal subunit.

The polypeptide is Small ribosomal subunit protein eS8 (Saccharolobus islandicus (strain M.14.25 / Kamchatka #1) (Sulfolobus islandicus)).